We begin with the raw amino-acid sequence, 645 residues long: DNA ligase (645 aa).

NAD(+)-binding positions include aspartate 30–aspartate 34 and serine 72–glutamine 73. Lysine 99 (N6-AMP-lysine intermediate) is an active-site residue. Residues arginine 120, glutamate 163, lysine 275, and lysine 296 each coordinate NAD(+). Cysteine 387, cysteine 390, cysteine 403, and cysteine 408 together coordinate Zn(2+). The BRCT domain maps to glutamate 564–valine 645.

The protein belongs to the NAD-dependent DNA ligase family. LigA subfamily. Requires Mg(2+) as cofactor. It depends on Mn(2+) as a cofactor.

The catalysed reaction is NAD(+) + (deoxyribonucleotide)n-3'-hydroxyl + 5'-phospho-(deoxyribonucleotide)m = (deoxyribonucleotide)n+m + AMP + beta-nicotinamide D-nucleotide.. DNA ligase that catalyzes the formation of phosphodiester linkages between 5'-phosphoryl and 3'-hydroxyl groups in double-stranded DNA using NAD as a coenzyme and as the energy source for the reaction. It is essential for DNA replication and repair of damaged DNA. In Treponema denticola (strain ATCC 35405 / DSM 14222 / CIP 103919 / JCM 8153 / KCTC 15104), this protein is DNA ligase.